An 804-amino-acid polypeptide reads, in one-letter code: Probable exo-1,4-beta-xylosidase xlnD (804 aa).

Residues 1–17 (MAVAALALLALLPQALG) form the signal peptide. N20, N115, N139, N234, and N243 each carry an N-linked (GlcNAc...) asparagine glycan. D307 is an active-site residue. N-linked (GlcNAc...) asparagine glycans are attached at residues N349, N382, N404, N433, N444, N485, N489, N621, N652, N666, N688, and N710.

It belongs to the glycosyl hydrolase 3 family.

The protein localises to the secreted. It catalyses the reaction Hydrolysis of (1-&gt;4)-beta-D-xylans, to remove successive D-xylose residues from the non-reducing termini.. It participates in glycan degradation; xylan degradation. Xylan 1,4-beta-xylosidase involved in the hydrolysis of xylan, a major structural heterogeneous polysaccharide found in plant biomass representing the second most abundant polysaccharide in the biosphere, after cellulose. This Aspergillus japonicus protein is Probable exo-1,4-beta-xylosidase xlnD (xlnD).